The sequence spans 569 residues: Arylsulfatase I (569 aa).

A signal peptide spans 1–23 (MHTLTGFSLVSLLSFGYLSWDWA). Ca(2+) contacts are provided by aspartate 55, aspartate 56, and cysteine 93. Cysteine 93 acts as the Nucleophile in catalysis. Cysteine 93 carries the 3-oxoalanine (Cys) modification. Position 147 (lysine 147) interacts with substrate. Residue histidine 149 is part of the active site. Histidine 239 contacts substrate. 2 N-linked (GlcNAc...) asparagine glycosylation sites follow: asparagine 276 and asparagine 288. Residues aspartate 297 and asparagine 298 each contribute to the Ca(2+) site. Lysine 315 contacts substrate. N-linked (GlcNAc...) asparagine glycans are attached at residues asparagine 466 and asparagine 496. Residues 510-539 (RAHPDFNGGAWGPWASDEEEEEEEGRARSF) are disordered.

Belongs to the sulfatase family. Ca(2+) serves as cofactor. In terms of processing, the oxidation of Cys-93 residue to 3-oxoalanine (also known as C(alpha)-formylglycine) by SUMF1/Sulfatase-modifying factor 1, seems critical for catalytic activity. As to expression, expressed in placenta, in embryonic stem cells, fetal eyes and lens.

It is found in the secreted. The protein resides in the endoplasmic reticulum. Functionally, displays arylsulfatase activity at neutral pH, when co-expressed with SUMF1; arylsulfatase activity is measured in the secretion medium of retinal cell line, but no activity is recorded when measured in cell extracts. Lacks arylsulfatase activity. This Homo sapiens (Human) protein is Arylsulfatase I (ARSI).